We begin with the raw amino-acid sequence, 374 residues long: Chaperone protein DnaJ (374 aa).

Residues 5–70 (DFYEILGVGK…QKRDAYDRYG (66 aa)) enclose the J domain. The disordered stretch occupies residues 29-50 (AMKHHPDRNPDSKGAEDKFKEA). Basic and acidic residues predominate over residues 35–50 (DRNPDSKGAEDKFKEA). Residues 134 to 212 (GYDTTIRVPS…CSGAGKIKRN (79 aa)) form a CR-type zinc finger. Zn(2+) contacts are provided by Cys147, Cys150, Cys164, Cys167, Cys186, Cys189, Cys200, and Cys203. CXXCXGXG motif repeat units follow at residues 147 to 154 (CETCDGSG), 164 to 171 (CTTCGGHG), 186 to 193 (CPKCHGSG), and 200 to 207 (CGTCSGAG).

The protein belongs to the DnaJ family. Homodimer. Zn(2+) serves as cofactor.

Its subcellular location is the cytoplasm. Its function is as follows. Participates actively in the response to hyperosmotic and heat shock by preventing the aggregation of stress-denatured proteins and by disaggregating proteins, also in an autonomous, DnaK-independent fashion. Unfolded proteins bind initially to DnaJ; upon interaction with the DnaJ-bound protein, DnaK hydrolyzes its bound ATP, resulting in the formation of a stable complex. GrpE releases ADP from DnaK; ATP binding to DnaK triggers the release of the substrate protein, thus completing the reaction cycle. Several rounds of ATP-dependent interactions between DnaJ, DnaK and GrpE are required for fully efficient folding. Also involved, together with DnaK and GrpE, in the DNA replication of plasmids through activation of initiation proteins. In Janthinobacterium sp. (strain Marseille) (Minibacterium massiliensis), this protein is Chaperone protein DnaJ.